A 150-amino-acid chain; its full sequence is 1,4-dihydroxy-2-naphthoyl-CoA hydrolase (150 aa).

Residue D19 is part of the active site.

Belongs to the 4-hydroxybenzoyl-CoA thioesterase family. DHNA-CoA hydrolase subfamily.

It carries out the reaction 1,4-dihydroxy-2-naphthoyl-CoA + H2O = 1,4-dihydroxy-2-naphthoate + CoA + H(+). The protein operates within cofactor biosynthesis; phylloquinone biosynthesis. It functions in the pathway quinol/quinone metabolism; 1,4-dihydroxy-2-naphthoate biosynthesis; 1,4-dihydroxy-2-naphthoate from chorismate: step 7/7. In terms of biological role, catalyzes the hydrolysis of 1,4-dihydroxy-2-naphthoyl-CoA (DHNA-CoA) to 1,4-dihydroxy-2-naphthoate (DHNA), a reaction involved in phylloquinone (vitamin K1) biosynthesis. The chain is 1,4-dihydroxy-2-naphthoyl-CoA hydrolase from Prochlorococcus marinus (strain MIT 9515).